Reading from the N-terminus, the 61-residue chain is MDPNCSCATGGSCTCTGSCKCKECKCTSCKKSCCSCCPMSCAKCAQGCICKGASEKCSCCA.

M1 is modified (N-acetylmethionine). A beta region spans residues 1–29 (MDPNCSCATGGSCTCTGSCKCKECKCTSC). C5, C7, C13, C15, C19, C21, C24, C26, C29, C33, C34, C36, C37, C41, C44, C48, C50, and C57 together coordinate a divalent metal cation. Residues 30–61 (KKSCCSCCPMSCAKCAQGCICKGASEKCSCCA) are alpha. S58 is modified (phosphoserine). C59 and C60 together coordinate a divalent metal cation.

Belongs to the metallothionein superfamily. Type 1 family. Monomer.

Its function is as follows. Metallothioneins have a high content of cysteine residues that bind various heavy metals; these proteins are transcriptionally regulated by both heavy metals and glucocorticoids. In Homo sapiens (Human), this protein is Metallothionein-1A (MT1A).